Here is a 249-residue protein sequence, read N- to C-terminus: Aliphatic sulfonates import ATP-binding protein SsuB 2 (249 aa).

In terms of domain architecture, ABC transporter spans 5 to 233; that stretch reads LDLLEIRKAY…PRDRRAVELA (229 aa). 37-44 contacts ATP; sequence GPSGCGKS.

The protein belongs to the ABC transporter superfamily. Aliphatic sulfonates importer (TC 3.A.1.17.2) family. The complex is composed of two ATP-binding proteins (SsuB), two transmembrane proteins (SsuC) and a solute-binding protein (SsuA).

Its subcellular location is the cell inner membrane. It carries out the reaction ATP + H2O + aliphatic sulfonate-[sulfonate-binding protein]Side 1 = ADP + phosphate + aliphatic sulfonateSide 2 + [sulfonate-binding protein]Side 1.. In terms of biological role, part of the ABC transporter complex SsuABC involved in aliphatic sulfonates import. Responsible for energy coupling to the transport system. The protein is Aliphatic sulfonates import ATP-binding protein SsuB 2 of Pseudomonas aeruginosa (strain ATCC 15692 / DSM 22644 / CIP 104116 / JCM 14847 / LMG 12228 / 1C / PRS 101 / PAO1).